Reading from the N-terminus, the 291-residue chain is Small ribosomal subunit protein uS2 (291 aa).

A disordered region spans residues 241–270 (KREPRQINRPVMSSENQAEQQTSVANENVQ). Polar residues predominate over residues 251–270 (VMSSENQAEQQTSVANENVQ).

Belongs to the universal ribosomal protein uS2 family.

This is Small ribosomal subunit protein uS2 from Mycoplasma capricolum subsp. capricolum (strain California kid / ATCC 27343 / NCTC 10154).